The sequence spans 342 residues: MVQASGHRRSTRGSKMVSWSVIAKIQEILQRKMVREFLAEFMSTYVMMVFGLGSVAHMVLNKKYGSYLGVNLGFGFGVTMGVHVAGRISGAHMNAAVTFANCALGRVPWRKFPVYVLGQFLGSFLAAATIYSLFYTAILHFSGGQLMVTGPVATAGIFATYLPDHMTLWRGFLNEAWLTGMLQLCLFAITDQENNPALPGTEALVIGILVVIIGVSLGMNTGYAINPSRDLPPRIFTFIAGWGKQVFSNGENWWWVPVVAPLLGAYLGGIIYLVFIGSTIPREPLKLEDSVAYEDHGITVLPKMGSHEPTISPLTPVSVSPANRSSVHPAPPLHESMALEHF.

Topologically, residues 1 to 36 (MVQASGHRRSTRGSKMVSWSVIAKIQEILQRKMVRE) are cytoplasmic. The residue at position 20 (Ser-20) is a Phosphoserine. The helical transmembrane segment at 37 to 54 (FLAEFMSTYVMMVFGLGS) threads the bilayer. The Extracellular segment spans residues 55 to 67 (VAHMVLNKKYGSY). A helical membrane pass occupies residues 68–85 (LGVNLGFGFGVTMGVHVA). Topologically, residues 86–89 (GRIS) are cytoplasmic. The discontinuously helical intramembrane region spans 90-103 (GAHMNAAVTFANCA). Residues 94 to 96 (NAA) carry the NPA 1 motif. The Cytoplasmic portion of the chain corresponds to 104–111 (LGRVPWRK). The helical transmembrane segment at 112–132 (FPVYVLGQFLGSFLAAATIYS) threads the bilayer. Over 133-170 (LFYTAILHFSGGQLMVTGPVATAGIFATYLPDHMTLWR) the chain is Extracellular. The helical transmembrane segment at 171–188 (GFLNEAWLTGMLQLCLFA) threads the bilayer. The Cytoplasmic portion of the chain corresponds to 189–200 (ITDQENNPALPG). Residues 201–217 (TEALVIGILVVIIGVSL) form a helical membrane-spanning segment. Residues 218–221 (GMNT) lie on the Extracellular side of the membrane. The discontinuously helical intramembrane region spans 222 to 235 (GYAINPSRDLPPRI). Positions 226-228 (NPS) match the NPA 2 motif. Topologically, residues 236–253 (FTFIAGWGKQVFSNGENW) are extracellular. Residues 254–275 (WWVPVVAPLLGAYLGGIIYLVF) traverse the membrane as a helical segment. Residues 276–342 (IGSTIPREPL…LHESMALEHF (67 aa)) are Cytoplasmic-facing.

This sequence belongs to the MIP/aquaporin (TC 1.A.8) family. In terms of assembly, homotetramer; each monomer provides an independent glycerol/water pore. Two homotetramers on opposing membranes can dimerize, forming a cell-cell junction. Interacts with PLIN1. In terms of processing, phosphorylation by PKA could prevent the interaction with PLIN1. Detected in the sperm head (at protein level). Detected in white adipose tissue.

The protein resides in the cell membrane. It localises to the cytoplasmic vesicle membrane. The protein localises to the lipid droplet. It carries out the reaction glycerol(in) = glycerol(out). The enzyme catalyses H2O(in) = H2O(out). It catalyses the reaction urea(in) = urea(out). With respect to regulation, glycerol transport is regulated by pH, with the porin being permeable to glycerol at pH 7.4 but not at pH 5.5. Water permeability, however, is not influenced by pH. Inhibited by mercury ions. In terms of biological role, aquaglyceroporins form homotetrameric transmembrane channels, with each monomer independently mediating glycerol and water transport across the plasma membrane along their osmotic gradient. Could also be permeable to urea. Mediates the efflux of glycerol, formed upon triglyceride hydrolysis, to avoid its accumulation in adipocytes and to make it available to other tissues. In the kidney, mediates the reabsorption of glycerol, preventing its loss in urine, again participating to energy homeostasis. In pancreatic beta cells, it also mediates the efflux of glycerol, regulating its intracellular levels. This chain is Aquaporin-7, found in Homo sapiens (Human).